Here is a 229-residue protein sequence, read N- to C-terminus: Lipoprotein-releasing system ATP-binding protein LolD (229 aa).

Residues 9–229 (LRLEQVARRY…TIREGQIVPA (221 aa)) form the ABC transporter domain. 45–52 (APSGTGKS) is a binding site for ATP.

This sequence belongs to the ABC transporter superfamily. Lipoprotein translocase (TC 3.A.1.125) family. As to quaternary structure, the complex is composed of two ATP-binding proteins (LolD) and two transmembrane proteins (LolC and LolE).

Its subcellular location is the cell inner membrane. Its function is as follows. Part of the ABC transporter complex LolCDE involved in the translocation of mature outer membrane-directed lipoproteins, from the inner membrane to the periplasmic chaperone, LolA. Responsible for the formation of the LolA-lipoprotein complex in an ATP-dependent manner. This Granulibacter bethesdensis (strain ATCC BAA-1260 / CGDNIH1) protein is Lipoprotein-releasing system ATP-binding protein LolD.